A 342-amino-acid chain; its full sequence is MDLTERHKRILKALVDEFIQENRPVGSKTLFDKHDIGLSPASIRTVLKDLEDFGYLASKHTSGGRIPTERGYRFYVDSLVILYELTLKEKQRIQQEYLKMQFKLDQILKATASVLSSLSNAAGIVIGPAKNLDTLKHIELIHVRGDEILMILVMRSGTVLHRNIFVDQNYSQEALYQVSKYLNDNLKGYDIYEIQNVIIPKLMIRKDGPEDFIRIADLISSAMTPDNSEVTLYIDGFKNLYANFRDEEQQLSQVLSLLDDQGFLKAFFSEYIDQDGVFTIIGKDGDRSMSGVSIITSNYKMGEKKIGALGIIGPQRMDYNRALPLVDFTSKLVSEMVTRISK.

Belongs to the HrcA family.

Functionally, negative regulator of class I heat shock genes (grpE-dnaK-dnaJ and groELS operons). Prevents heat-shock induction of these operons. The chain is Heat-inducible transcription repressor HrcA from Leptospira interrogans serogroup Icterohaemorrhagiae serovar copenhageni (strain Fiocruz L1-130).